The sequence spans 162 residues: VLLDGFIRKFVLCPECENPETELLVSTKRSTISQGCKACGYHSPLESNHKLVTFILKNPPNLNPAVQGSSLTEGKRSKRSKRPNGDTNGDTSQVDDQNESLEASVNENSKNGDDDEGHEWQADVSEEAVRARMQDLTEGAKNMTINDDLEKREKDRMDIFYE.

Positions 59–162 (PPNLNPAVQG…EKDRMDIFYE (104 aa)) are disordered. Positions 85-109 (GDTNGDTSQVDDQNESLEASVNENS) are enriched in polar residues. Over residues 148-162 (DLEKREKDRMDIFYE) the composition is skewed to basic and acidic residues.

It belongs to the eIF-2-beta/eIF-5 family.

Catalyzes the hydrolysis of GTP bound to the 40S ribosomal initiation complex (40S.mRNA.Met-tRNA[F].eIF-2.GTP) with the subsequent joining of a 60S ribosomal subunit resulting in the release of eIF-2 and the guanine nucleotide. The subsequent joining of a 60S ribosomal subunit results in the formation of a functional 80S initiation complex (80S.mRNA.Met-tRNA[F]). This Tribolium castaneum (Red flour beetle) protein is Eukaryotic translation initiation factor 5.